A 90-amino-acid polypeptide reads, in one-letter code: Progonadoliberin-1 (90 aa).

A signal peptide spans 1–24 (MSRHVTVVLLLAIVLLLSSHMIHG). A Pyrrolidone carboxylic acid modification is found at Gln-25. Gly-34 bears the Glycine amide mark.

It belongs to the GnRH family. In terms of tissue distribution, forebrain.

The protein resides in the secreted. Stimulates the secretion of gonadotropins. The polypeptide is Progonadoliberin-1 (gnrh1) (Aquarana catesbeiana (American bullfrog)).